The following is a 247-amino-acid chain: MSRDDQLFTLWGKLNDRQKDNFLKWMKAFDVEKTYQKTSGDIFNDDFFDIFGDRLITHHFSSTQALTKTLFEHAFNDSLNESGVISSLAESRTNPGHDITIDSIKVALKTEAAKNISKSYIHVSKWMELGKGEWILELLLERFLEHLENYERIFTLRYFKISEYKFSYQLVEIPKSLLLEAKNAKLEIMSGSKQSPKPGYGYVLDENENKKFSLYFDGGAERKLQIKHLNLEHCIVHGVWDFILPPP.

Mg(2+) serves as cofactor. It depends on K(+) as a cofactor.

The catalysed reaction is Endonucleolytic cleavage of DNA to give specific double-stranded fragments with terminal 5'-phosphates.. Its function is as follows. A P subtype restriction enzyme that recognizes the double-stranded sequence 5'-CCCGGG-3' and cleaves after C-3. The polypeptide is Type II restriction enzyme SmaI (smaIR) (Serratia marcescens).